A 318-amino-acid chain; its full sequence is NADH-ubiquinone oxidoreductase chain 1 (318 aa).

8 helical membrane passes run 2-22 (FLIN…FLTL), 69-89 (FLFT…WAPL), 102-122 (LLFI…SGWA), 146-166 (MTTI…TAFA), 171-191 (HLWL…STLA), 222-242 (LFFM…VILF), 253-273 (EIST…FLWV), and 294-314 (LPLT…LACI).

The protein belongs to the complex I subunit 1 family. Core subunit of respiratory chain NADH dehydrogenase (Complex I) which is composed of 45 different subunits.

It is found in the mitochondrion inner membrane. It carries out the reaction a ubiquinone + NADH + 5 H(+)(in) = a ubiquinol + NAD(+) + 4 H(+)(out). Its function is as follows. Core subunit of the mitochondrial membrane respiratory chain NADH dehydrogenase (Complex I) which catalyzes electron transfer from NADH through the respiratory chain, using ubiquinone as an electron acceptor. Essential for the catalytic activity and assembly of complex I. This is NADH-ubiquinone oxidoreductase chain 1 (MT-ND1) from Elephas maximus (Indian elephant).